We begin with the raw amino-acid sequence, 242 residues long: Lectin-like protein At1g53060 (242 aa).

Residues 3–237 (FHGDAEYASE…RHEILDWSFE (235 aa)) form a legume-lectin like region. Position 207 is a phosphoserine (S207).

The protein belongs to the leguminous lectin family.

This chain is Lectin-like protein At1g53060, found in Arabidopsis thaliana (Mouse-ear cress).